The primary structure comprises 121 residues: Small ribosomal subunit protein bS21m (121 aa).

The N-terminal 14 residues, 1-14, are a transit peptide targeting the mitochondrion; the sequence is MNSSYFPGVLGVRW.

The protein belongs to the bacterial ribosomal protein bS21 family. Component of the mitochondrial small ribosomal subunit (mt-SSU). Mature yeast 74S mitochondrial ribosomes consist of a small (37S) and a large (54S) subunit. The 37S small subunit contains a 15S ribosomal RNA (15S mt-rRNA) and at least 32 different proteins. The 54S large subunit contains a 21S rRNA (21S mt-rRNA) and at least 45 different proteins.

It is found in the mitochondrion. Component of the mitochondrial ribosome (mitoribosome), a dedicated translation machinery responsible for the synthesis of mitochondrial genome-encoded proteins, including at least some of the essential transmembrane subunits of the mitochondrial respiratory chain. The mitoribosomes are attached to the mitochondrial inner membrane and translation products are cotranslationally integrated into the membrane. The chain is Small ribosomal subunit protein bS21m (mrp21) from Schizosaccharomyces pombe (strain 972 / ATCC 24843) (Fission yeast).